The primary structure comprises 440 residues: N-succinylarginine dihydrolase (440 aa).

Residues 17–26 (GGLSPGNLAS), asparagine 108, and 135–136 (HR) each bind substrate. Residues 17–37 (GGLSPGNLASQSHVGEPSHPR) are disordered. The active site involves glutamate 172. Residue arginine 210 coordinates substrate. The active site involves histidine 246. 2 residues coordinate substrate: aspartate 248 and asparagine 358. Catalysis depends on cysteine 364, which acts as the Nucleophile.

The protein belongs to the succinylarginine dihydrolase family. In terms of assembly, homodimer.

The enzyme catalyses N(2)-succinyl-L-arginine + 2 H2O + 2 H(+) = N(2)-succinyl-L-ornithine + 2 NH4(+) + CO2. It participates in amino-acid degradation; L-arginine degradation via AST pathway; L-glutamate and succinate from L-arginine: step 2/5. Functionally, catalyzes the hydrolysis of N(2)-succinylarginine into N(2)-succinylornithine, ammonia and CO(2). This Myxococcus xanthus (strain DK1622) protein is N-succinylarginine dihydrolase.